Here is a 688-residue protein sequence, read N- to C-terminus: Glycine--tRNA ligase beta subunit (688 aa).

Belongs to the class-II aminoacyl-tRNA synthetase family. In terms of assembly, tetramer of two alpha and two beta subunits.

It is found in the cytoplasm. It catalyses the reaction tRNA(Gly) + glycine + ATP = glycyl-tRNA(Gly) + AMP + diphosphate. In Histophilus somni (strain 129Pt) (Haemophilus somnus), this protein is Glycine--tRNA ligase beta subunit.